A 326-amino-acid chain; its full sequence is Inactive peptidyl-prolyl cis-trans isomerase FKBP6 (326 aa).

Residues 53–142 (DASVLVKYSG…LFEIELLDFL (90 aa)) form the PPIase FKBP-type domain. 3 TPR repeats span residues 170 to 203 (AATE…LHRR), 218 to 251 (LLVF…DRKN), and 252 to 285 (AKAL…QPFN).

Belongs to the FKBP6 family. In terms of assembly, interacts with HSP72/HSPA2 and CLTC. Interacts with GAPDH; leading to inhibit GAPDH catalytic activity. Interacts (via TPR repeats) with HSP90.

The protein localises to the cytoplasm. It is found in the cytosol. Its subcellular location is the nucleus. In terms of biological role, co-chaperone required during spermatogenesis to repress transposable elements and prevent their mobilization, which is essential for the germline integrity. Acts via the piRNA metabolic process, which mediates the repression of transposable elements during meiosis by forming complexes composed of piRNAs and Piwi proteins and govern the methylation and subsequent repression of transposons. Acts as a co-chaperone via its interaction with HSP90 and is required for the piRNA amplification process, the secondary piRNA biogenesis. May be required together with HSP90 in removal of 16 nucleotide ping-pong by-products from Piwi complexes, possibly facilitating turnover of Piwi complexes. In Bos taurus (Bovine), this protein is Inactive peptidyl-prolyl cis-trans isomerase FKBP6 (FKBP6).